The following is a 160-amino-acid chain: Large ribosomal subunit protein eL29 (160 aa).

The span at 1-26 (MAKSKNHTTHNQSRKWHRNGIKKPRS) shows a compositional bias: basic residues. 2 disordered regions span residues 1–34 (MAKS…SLKG) and 115–160 (RLCQ…VKAP). Residue Lys-5 is modified to N6-methyllysine. Ser-31 bears the Phosphoserine mark. Residue Lys-33 is modified to N6-acetyllysine. Residues 126 to 160 (KAGAKAPAKAQASAPAQAPKGAQAPKGAQAPVKAP) show a composition bias toward low complexity. Tandem repeats lie at residues 127–134 (AGAKAPAK) and 135–142 (AQASAPAQ). The tract at residues 127-142 (AGAKAPAKAQASAPAQ) is 2 X 8 AA tandem repeats of A-X-A-K-A-P-A-[KQ]. At Ser-138 the chain carries Phosphoserine. An N6-acetyllysine modification is found at Lys-145.

This sequence belongs to the eukaryotic ribosomal protein eL29 family. As to quaternary structure, component of the large ribosomal subunit.

It localises to the cytoplasm. In terms of biological role, component of the large ribosomal subunit. The ribosome is a large ribonucleoprotein complex responsible for the synthesis of proteins in the cell. This Mus musculus (Mouse) protein is Large ribosomal subunit protein eL29 (Rpl29).